The primary structure comprises 313 residues: MIGRHKHCIALEDFSREEILEVIDLAVSMKEVLQRPIKKVPSLRGKMVVNLFFEASTRTRSSFETAAKILSADALNWTSSSSSVTKGETLVDTAKNLEAMRPDVLVIRHSAGGAPRLVAEHVGCSVVSAGDGAHEHPSQGLLDCFTLREKLGTLEGKTVAIVGDVSHSRVARSDLHAFPKLGAKVRLCGPPTMMPAGVERLGATVHTDLREAVDGADAVIMLRIQHERIGDPLIPGTREYSKVWGLNAKKAADWLKPSCVILHPGPINRGVELSPEVADGPRSVILDQVQNGVAVRMAILYLLAGGAGEEARA.

The carbamoyl phosphate site is built by Arg58 and Thr59. Lys86 contributes to the L-aspartate binding site. Carbamoyl phosphate is bound by residues Arg108, His136, and Gln139. Arg169 and Arg223 together coordinate L-aspartate. Residues Gly265 and Pro266 each contribute to the carbamoyl phosphate site.

Belongs to the aspartate/ornithine carbamoyltransferase superfamily. ATCase family. In terms of assembly, heterododecamer (2C3:3R2) of six catalytic PyrB chains organized as two trimers (C3), and six regulatory PyrI chains organized as three dimers (R2).

It carries out the reaction carbamoyl phosphate + L-aspartate = N-carbamoyl-L-aspartate + phosphate + H(+). The protein operates within pyrimidine metabolism; UMP biosynthesis via de novo pathway; (S)-dihydroorotate from bicarbonate: step 2/3. In terms of biological role, catalyzes the condensation of carbamoyl phosphate and aspartate to form carbamoyl aspartate and inorganic phosphate, the committed step in the de novo pyrimidine nucleotide biosynthesis pathway. This chain is Aspartate carbamoyltransferase catalytic subunit, found in Anaeromyxobacter dehalogenans (strain 2CP-C).